Reading from the N-terminus, the 621-residue chain is UvrABC system protein C (621 aa).

A GIY-YIG domain is found at 20–98 (TAPGVYRMYA…IKSLTPRYNV (79 aa)). One can recognise a UVR domain in the interval 207–242 (DLLAEELIQAMQVASEHLEFEQAARLRDLLTSLRSM).

This sequence belongs to the UvrC family. Interacts with UvrB in an incision complex.

Its subcellular location is the cytoplasm. In terms of biological role, the UvrABC repair system catalyzes the recognition and processing of DNA lesions. UvrC both incises the 5' and 3' sides of the lesion. The N-terminal half is responsible for the 3' incision and the C-terminal half is responsible for the 5' incision. The chain is UvrABC system protein C from Xylella fastidiosa (strain Temecula1 / ATCC 700964).